An 887-amino-acid polypeptide reads, in one-letter code: MLNKFIVIVTMLAMWNYAQDCNFELSKNETVQFTSFLPLILNCASISKFDTDLCETINDERPYNWYFQNKKIGNETKGKIKLVSSSQQMIIFNGSASDEGNYMCETINNNKEFISKTFDARMIEPSMTQMELLLNSFPNDHQEEINGRIYWLPEMILNHIRDVVIINQGAESDLHSFYYVSGSDSQISTFDVQWYFHYQPKSEDKTIIDHNIKTFYSSCNDLDLLPRKVNGSCYSSRLYLYNVEIKDQGFYSVEATLRMKNGSSHGLNFTYELKINIANILDPDKTNSILSTPQISFNLNSRVCINDRFDWICKVTPVVSYYVTIYKNNSNPNNITVLAESEVLQMNIDGNSGQGFYLKSSTVNYSVNSVQREHAGVYACRIINFKDYSSDHQNRHEPEVLMRLTVKDCVGNSYFTIIWYSISVGIIILVVISFLIIRLYNKYSNGYIVKTVIVQHPNKLYVPHDTCFPLLMPDITIKTIHKHINSSEDSLLQQKHFTNNSNIPFSQKISKYFRKSFIFSYRHVDVSSSNLDSPLGVISNTETNKLTSNSLTVETQRPQLILQNDANTKYILPSNIGWIFSRDSLIIGSKIGEGAFGIVYSALVKSFSENSASVEVAIKTLHTSFGDQDVINLIQELEMMKIIGRHRHIISLYGACIDNGHPYMVIELAKHGNLRDFLRAQRSQSKVGEIQNSGGLVTRLTVTDFLRFSIEIAEGMEYLSSRKIIHRDLAARNVLVDQYVEMKIADFGLTRIVENYYRKTTDGRLPIKWMAPECLLDRVYTVKSDVWSYGIVLWEIFTMGQTPYPTIQSDGMHQALRNGIRNEKPALASDEMYRLMLTIWNDDPLERHTFSEIIDKLTHIQLSNGGSSPKRDYLEISSNQCYSTTIV.

The N-terminal stretch at 1 to 18 (MLNKFIVIVTMLAMWNYA) is a signal peptide. Topologically, residues 19 to 416 (QDCNFELSKN…KDCVGNSYFT (398 aa)) are extracellular. Ig-like C2-type domains follow at residues 22 to 115 (NFEL…EFIS) and 180 to 260 (VSGS…LRMK). Residues Asn28, Asn74, Asn93, Asn230, Asn261, Asn268, Asn328, Asn334, and Asn364 are each glycosylated (N-linked (GlcNAc...) asparagine). The cysteines at positions 43 and 104 are disulfide-linked. The region spanning 297–387 (FNLNSRVCIN…YACRIINFKD (91 aa)) is the Ig-like C2-type 3 domain. Cys313 and Cys380 form a disulfide bridge. The helical transmembrane segment at 417-437 (IIWYSISVGIIILVVISFLII) threads the bilayer. Residues 438 to 887 (RLYNKYSNGY…SNQCYSTTIV (450 aa)) lie on the Cytoplasmic side of the membrane. Residues 585–862 (LIIGSKIGEG…IIDKLTHIQL (278 aa)) enclose the Protein kinase domain. ATP-binding positions include 591-599 (IGEGAFGIV) and Lys619. Asp728 serves as the catalytic Proton acceptor. Tyr757 carries the phosphotyrosine; by autocatalysis modification.

Belongs to the protein kinase superfamily. Tyr protein kinase family. Fibroblast growth factor receptor subfamily. As to expression, expressed in brain, stem cells and the mesenchymal cells.

The protein localises to the membrane. The catalysed reaction is L-tyrosyl-[protein] + ATP = O-phospho-L-tyrosyl-[protein] + ADP + H(+). Its function is as follows. Receptor for basic fibroblast growth factor. The sequence is that of Fibroblast growth factor receptor 2 (FGFR2) from Dugesia japonica (Planarian).